A 342-amino-acid polypeptide reads, in one-letter code: Bifunctional terpene synthase Agr4 (342 aa).

Mg(2+) is bound by residues Asp87, Asn222, Ser226, and Glu230. Positions 87–91 (DEVSD) match the DDXXD motif motif. (2E,6E)-farnesyl diphosphate contacts are provided by Arg308 and Tyr309.

It belongs to the terpene synthase family. It depends on Mg(2+) as a cofactor.

The enzyme catalyses (2E,6E)-farnesyl diphosphate = delta-cadinene + diphosphate. The catalysed reaction is (2E,6E)-farnesyl diphosphate = gamma-muurolene + diphosphate. It catalyses the reaction (2E,6E)-farnesyl diphosphate = beta-copaene + diphosphate. It carries out the reaction (2E)-geranyl diphosphate = beta-myrcene + diphosphate. Functionally, terpene cyclase that catalyzes the cyclization of farnesyl diphosphate (FPP) to various sesquiterpenes, including beta-copaene, alpha-cubebene, cadina-1(6),4-diene, gamma-muurolene, delta-cadinene, epizonarene, epicubenol and cubenol. Agr4 is also able to use the monoterpene precursor geranyl diphosphate (GPP) as substrates to synthesize the monoterpene beta-myrcene. Delta-cadinene is the major product of Agr4. The chain is Bifunctional terpene synthase Agr4 from Cyclocybe aegerita (Black poplar mushroom).